A 408-amino-acid chain; its full sequence is 2-acyl-4-prenylphloroglucinol 6-prenyltransferase, chloroplastic (408 aa).

A chloroplast-targeting transit peptide spans 1 to 46; that stretch reads MELSSACNLSLKPNYYYYPTSLFPSNNSYNNLKASSYYQTQRPIKC. 9 helical membrane passes run 119–139, 146–166, 193–213, 217–237, 257–277, 281–301, 326–346, 355–375, and 388–408; these read PIPF…ELLK, WQLM…HIYI, SVKS…LLMI, CGLF…MYSV, IGIG…GLPF, PPFT…SILK, IVLV…GVAI, YIMI…TWLL, and YYHF…FIST.

Belongs to the UbiA prenyltransferase family. Homo- and heteromer. Interacts with PT1L, forming a functional metabolon. It depends on Mg(2+) as a cofactor. In terms of tissue distribution, expressed in trichomes.

It localises to the plastid. Its subcellular location is the chloroplast membrane. It carries out the reaction a 2-acyl-4-prenylphloroglucinol + dimethylallyl diphosphate = a 2-acyl-4,6-diprenylphloroglucinol + diphosphate. The enzyme catalyses a 2-acyl-4,6-diprenylphloroglucinol + dimethylallyl diphosphate = a 2-acyl-4,6,6-triprenylphloroglucinol + diphosphate. It participates in secondary metabolite biosynthesis. Involved in the biosynthesis of prenylated phenolics natural products which contribute to the bitter taste of beer and display broad biological activities. Catalyzes the two last prenylation steps in the beta-bitter acid pathway. Uses dimethylallyl diphosphate (DMAPP) as the prenyl donor. This is 2-acyl-4-prenylphloroglucinol 6-prenyltransferase, chloroplastic from Humulus lupulus (European hop).